We begin with the raw amino-acid sequence, 122 residues long: Flagellar hook-basal body complex protein FliE (122 aa).

Belongs to the FliE family.

It localises to the bacterial flagellum basal body. This chain is Flagellar hook-basal body complex protein FliE, found in Marinobacter nauticus (strain ATCC 700491 / DSM 11845 / VT8) (Marinobacter aquaeolei).